Consider the following 90-residue polypeptide: Small ribosomal subunit protein bS18 (90 aa).

The tract at residues 1-24 is disordered; sequence MKPMRQKPGRGQGNKSISNALASK.

This sequence belongs to the bacterial ribosomal protein bS18 family. In terms of assembly, part of the 30S ribosomal subunit. Forms a tight heterodimer with protein bS6.

Functionally, binds as a heterodimer with protein bS6 to the central domain of the 16S rRNA, where it helps stabilize the platform of the 30S subunit. This chain is Small ribosomal subunit protein bS18, found in Chlorobium phaeovibrioides (strain DSM 265 / 1930) (Prosthecochloris vibrioformis (strain DSM 265)).